A 538-amino-acid chain; its full sequence is Cytosolic Fe-S cluster assembly factor NAR1 homolog (538 aa).

[4Fe-4S] cluster contacts are provided by cysteine 19, cysteine 64, cysteine 67, cysteine 70, cysteine 218, cysteine 273, cysteine 453, and cysteine 457.

The protein belongs to the NARF family.

It localises to the cytoplasm. Its subcellular location is the nucleus. In terms of biological role, component of the cytosolic Fe/S protein assembly machinery. Required for maturation of extramitochondrial Fe/S proteins. May play a role in the transfer of pre-assembled Fe/S clusters to target apoproteins. The chain is Cytosolic Fe-S cluster assembly factor NAR1 homolog from Schizosaccharomyces pombe (strain 972 / ATCC 24843) (Fission yeast).